A 132-amino-acid chain; its full sequence is Small ribosomal subunit protein uS9 (132 aa).

Belongs to the universal ribosomal protein uS9 family.

This Leptospira interrogans serogroup Icterohaemorrhagiae serovar copenhageni (strain Fiocruz L1-130) protein is Small ribosomal subunit protein uS9.